The chain runs to 630 residues: Zinc finger protein MSN4 (630 aa).

Met-1 bears the N-acetylmethionine mark. Over residues 37–56 the composition is skewed to low complexity; it reads TTNVSATSSNDNSANNSISS. Disordered regions lie at residues 37-77 and 115-137; these read TTNV…ATNT and FVNDGEKQSSNANGKKNGGDKIY. Position 178 is a phosphoserine (Ser-178). The short motif at 237 to 245 is the 9aaTAD element; it reads SILEDFVSS. Ser-263 is subject to Phosphoserine. Over residues 292-303 the composition is skewed to polar residues; the sequence is KNSSNSKPTQQI. 2 disordered regions span residues 292 to 322 and 360 to 379; these read KNSSNSKPTQQIIPEGTATTERRGSTISPTT and SISSSLNRISHSSSTTRQQR. Ser-316 and Ser-319 each carry phosphoserine. Residues 360–373 are compositionally biased toward low complexity; that stretch reads SISSSLNRISHSSS. The residue at position 479 (Thr-479) is a Phosphothreonine. A disordered region spans residues 502-566; the sequence is TSQAHHAAQH…KSITTIDPNN (65 aa). Low complexity predominate over residues 504–515; it reads QAHHAAQHHQQQ. 2 stretches are compositionally biased toward polar residues: residues 516-525 and 532-547; these read PTKQATVSPN and SSVTLSPTISHNNNNG. At Ser-558 the chain carries Phosphoserine. 2 C2H2-type zinc fingers span residues 573-596 and 602-624; these read FKCKDCEKAFRRSEHLKRHIRSVH and FACMFCEKKFSRSDNLSQHLKTH.

Its subcellular location is the cytoplasm. It is found in the nucleus. Positive transcriptional factor that acts as a component of the stress responsive system. Recognizes and binds to the stress response element (STRE) which is involved in the response to various forms of stress (heat, oxidative, osmotic, etc.). Involved in the regulation of the CTT1, DDR2, HSP12 genes. In Saccharomyces cerevisiae (strain ATCC 204508 / S288c) (Baker's yeast), this protein is Zinc finger protein MSN4 (MSN4).